The following is a 316-amino-acid chain: Acetyl-coenzyme A carboxylase carboxyl transferase subunit beta, chloroplastic (316 aa).

One can recognise a CoA carboxyltransferase N-terminal domain in the interval 47–316 (LWTRCDNCEN…CKKFQNSFFK (270 aa)). Zn(2+) is bound by residues Cys51, Cys54, Cys70, and Cys73. The segment at 51–73 (CDNCENMLYVRFLRQNKRICEEC) adopts a C4-type zinc-finger fold.

This sequence belongs to the AccD/PCCB family. As to quaternary structure, acetyl-CoA carboxylase is a heterohexamer composed of biotin carboxyl carrier protein, biotin carboxylase and 2 subunits each of ACCase subunit alpha and ACCase plastid-coded subunit beta (accD). Zn(2+) serves as cofactor.

The protein localises to the plastid. The protein resides in the chloroplast stroma. The catalysed reaction is N(6)-carboxybiotinyl-L-lysyl-[protein] + acetyl-CoA = N(6)-biotinyl-L-lysyl-[protein] + malonyl-CoA. It participates in lipid metabolism; malonyl-CoA biosynthesis; malonyl-CoA from acetyl-CoA: step 1/1. Its function is as follows. Component of the acetyl coenzyme A carboxylase (ACC) complex. Biotin carboxylase (BC) catalyzes the carboxylation of biotin on its carrier protein (BCCP) and then the CO(2) group is transferred by the transcarboxylase to acetyl-CoA to form malonyl-CoA. In Marchantia polymorpha (Common liverwort), this protein is Acetyl-coenzyme A carboxylase carboxyl transferase subunit beta, chloroplastic.